A 282-amino-acid chain; its full sequence is Probable methylxanthine N7-demethylase NdmC (282 aa).

It carries out the reaction 7-methylxanthine + NADPH + O2 + H(+) = xanthine + formaldehyde + NADP(+) + H2O. The enzyme catalyses 7-methylxanthine + NADH + O2 + H(+) = xanthine + formaldehyde + NAD(+) + H2O. Its function is as follows. Involved in the caffeine degradation, which is the essential first step for assimilating the carbon and nitrogen in caffeine. Probably catalyzes the N7-demethylation of 7-methylxanthine to produce xanthine and formaldehyde. This Pseudomonas sp. (strain TJI-51) protein is Probable methylxanthine N7-demethylase NdmC.